Here is a 61-residue protein sequence, read N- to C-terminus: Double gene block protein 1 (61 aa).

Residues 15-45 are disordered; that stretch reads LAGNRGKQKTRRSVAKDAIRKPASDSTNGGN. Positions 17-35 are RNA-binding; sequence GNRGKQKTRRSVAKDAIRK. A compositionally biased stretch (basic and acidic residues) spans 28–37; that stretch reads VAKDAIRKPA.

This sequence belongs to the carmovirus double gene block protein 1 family. Homodimer.

In terms of biological role, cell-to-cell movement. Displays RNA-binding activity. The polypeptide is Double gene block protein 1 (Carnation mottle virus (isolate China/Shanghai) (CarMV)).